A 414-amino-acid chain; its full sequence is uncharacterized protein (414 aa).

It belongs to the glycosyltransferase 28 family.

This is an uncharacterized protein from Mycobacterium tuberculosis (strain CDC 1551 / Oshkosh).